The following is a 1112-amino-acid chain: DNA polymerase II large subunit (1112 aa).

The protein belongs to the archaeal DNA polymerase II family. As to quaternary structure, heterodimer of a large subunit and a small subunit.

The enzyme catalyses DNA(n) + a 2'-deoxyribonucleoside 5'-triphosphate = DNA(n+1) + diphosphate. It catalyses the reaction Exonucleolytic cleavage in the 3'- to 5'-direction to yield nucleoside 5'-phosphates.. Functionally, possesses two activities: a DNA synthesis (polymerase) and an exonucleolytic activity that degrades single-stranded DNA in the 3'- to 5'-direction. Has a template-primer preference which is characteristic of a replicative DNA polymerase. The polypeptide is DNA polymerase II large subunit (Cenarchaeum symbiosum (strain A)).